The primary structure comprises 874 residues: Valine--tRNA ligase (874 aa).

A disordered region spans residues 1 to 22 (MTENSQQPQPAPSTELPTQYTP). Residues 57–67 (PNVTGSLHLGH) carry the 'HIGH' region motif. Positions 531–535 (KMSKS) match the 'KMSKS' region motif. Lysine 534 contacts ATP. Positions 805–871 (VIDFAAERKR…TRITAQLEKL (67 aa)) form a coiled coil.

This sequence belongs to the class-I aminoacyl-tRNA synthetase family. ValS type 1 subfamily. In terms of assembly, monomer.

It localises to the cytoplasm. The enzyme catalyses tRNA(Val) + L-valine + ATP = L-valyl-tRNA(Val) + AMP + diphosphate. Its function is as follows. Catalyzes the attachment of valine to tRNA(Val). As ValRS can inadvertently accommodate and process structurally similar amino acids such as threonine, to avoid such errors, it has a 'posttransfer' editing activity that hydrolyzes mischarged Thr-tRNA(Val) in a tRNA-dependent manner. The protein is Valine--tRNA ligase of Streptomyces coelicolor (strain ATCC BAA-471 / A3(2) / M145).